Here is a 453-residue protein sequence, read N- to C-terminus: Plasticin (453 aa).

The tract at residues 1-51 (MSHSTFSHLFSPHFGAPVYSPVSSRIGGRYVSSSVPTRSVDFRSRSSAPAP) is head. The segment at 71–112 (FATRSNEKRELQELNDRFASFIEKVRHLEQQNSKLILELGQY) is coil 1A. The region spanning 77–390 (EKRELQELND…KLLEGEENRI (314 aa)) is the IF rod domain. A linker 1 region spans residues 113–126 (KDQHQGSTGRINEL). A coil 1B region spans residues 127-222 (CQQEMRELRR…KMHDEEIQDV (96 aa)). A linker 12 region spans residues 223–245 (QVSVQSQQMKMEVMETSSRPDLT). A coil 2 region spans residues 246–391 (GALRDIRAQY…LLEGEENRIV (146 aa)). The tract at residues 392–453 (VPIMKMPSMS…KKDSHGQGKD (62 aa)) is tail. The interval 421–453 (IKTVETRDGEVVKESTKEKGRDEKKDSHGQGKD) is disordered. A compositionally biased stretch (basic and acidic residues) spans 424–453 (VETRDGEVVKESTKEKGRDEKKDSHGQGKD).

It belongs to the intermediate filament family. As to expression, optic nerve.

Its function is as follows. Type III neurofilament. The polypeptide is Plasticin (Carassius auratus (Goldfish)).